A 260-amino-acid chain; its full sequence is Dehydrogenase/reductase SDR family member 4 (260 aa).

14–38 (IVTAATKGIGLAIAERLLDEGASVV) serves as a coordination point for NADP(+). S148 contacts substrate. The Proton acceptor role is filled by Y161. NADP(+) is bound at residue K165.

It belongs to the short-chain dehydrogenases/reductases (SDR) family.

The enzyme catalyses a secondary alcohol + NADP(+) = a ketone + NADPH + H(+). In terms of biological role, catalyzes the reduction of isatin, 4-oxonon-2-enal, 9,10-phenanthrenequinone, menadione, 2,3-hexaenadione, 3,4-hexanedione and 2,3-heptanedione. This is Dehydrogenase/reductase SDR family member 4 from Caenorhabditis elegans.